The sequence spans 884 residues: DNA replication licensing factor mcm2 (884 aa).

A compositionally biased stretch (polar residues) spans 1-16 (MADSSESFNIATSPRT). Disordered regions lie at residues 1–61 (MADS…IGDA) and 120–151 (LYDS…EDEE). Residues 47–58 (PREEEEDGEELI) show a composition bias toward acidic residues. The segment at 314–340 (CNKCNFILGPFFQSQNQEVKPGSCPEC) adopts a C4-type zinc-finger fold. One can recognise an MCM domain in the interval 458–664 (IGERIFASIA…VQDEMLARFV (207 aa)). Residues Ser515 and Gln516 each coordinate ADP. Residues 640-643 (SRFD) carry the Arginine finger motif.

It belongs to the MCM family. In terms of assembly, component of the mcm2-7 complex (RLF-M). The complex forms a toroidal hexameric ring with the proposed subunit order mcm2-mcm6-mcm4-mcm7-mcm3-mcm5. Component of the replisome complex. Component of the CMG helicase complex, composed of the mcm2-7 complex, the GINS complex and cdc45. May be in a phosphorylated state in the mitotic mcm complex. Phosphorylated in the interphase mcm complex. Phosphorylated by the cdc7-dbf4 and cdc7-dbf4b complexes.

It is found in the nucleus. The protein localises to the chromosome. It catalyses the reaction ATP + H2O = ADP + phosphate + H(+). Its function is as follows. Acts as a component of the MCM2-7 complex (MCM complex) which is the replicative helicase essential for 'once per cell cycle' DNA replication initiation and elongation in eukaryotic cells. Core component of CDC45-MCM-GINS (CMG) helicase, the molecular machine that unwinds template DNA during replication, and around which the replisome is built. The active ATPase sites in the MCM2-7 ring are formed through the interaction surfaces of two neighboring subunits such that a critical structure of a conserved arginine finger motif is provided in trans relative to the ATP-binding site of the Walker A box of the adjacent subunit. The six ATPase active sites, however, are likely to contribute differentially to the complex helicase activity. Required for the entry in S phase and for cell division. This chain is DNA replication licensing factor mcm2, found in Xenopus tropicalis (Western clawed frog).